Here is a 259-residue protein sequence, read N- to C-terminus: UPF0758 protein Bphyt_3148 (259 aa).

Residues 137 to 259 (LLNSPEAVEN…VYSFARAGWP (123 aa)) form the MPN domain. Positions 208, 210, and 221 each coordinate Zn(2+). Residues 208–221 (HNHPSGAVQPSASD) carry the JAMM motif motif.

Belongs to the UPF0758 family.

The polypeptide is UPF0758 protein Bphyt_3148 (Paraburkholderia phytofirmans (strain DSM 17436 / LMG 22146 / PsJN) (Burkholderia phytofirmans)).